A 430-amino-acid polypeptide reads, in one-letter code: Cortical fragment-lytic enzyme (430 aa).

2 consecutive LysM domains span residues 3–47 (QIVT…ALIV) and 52–96 (NNYY…QLYV). A GH18 domain is found at 104 to 430 (VESIAYLQPS…VENFTITKKG (327 aa)). Glu-219 (proton donor) is an active-site residue.

It belongs to the glycosyl hydrolase 18 family. Chitinase class II subfamily.

It localises to the spore cortex. With respect to regulation, inhibited by diethylpyrocarbonate. Functionally, N-acetylglucosaminidase involved in cortex peptidoglycan degradation during germination. Cleaves only partially degraded spore peptidoglycans. Recognizes muramic acid delta-lactam residues specific to spore peptidoglycans. The chain is Cortical fragment-lytic enzyme from Bacillus cereus.